Consider the following 215-residue polypeptide: Glycerol-3-phosphate acyltransferase (215 aa).

A run of 6 helical transmembrane segments spans residues 3 to 23 (LILL…LWIG), 42 to 61 (TNTF…LIDI), 68 to 90 (TLLP…FAVL), 110 to 130 (AGVL…VFVL), 134 to 154 (LFSM…ISVL), and 162 to 182 (LLPG…AIII).

It belongs to the PlsY family. Probably interacts with PlsX.

The protein resides in the cell membrane. It catalyses the reaction an acyl phosphate + sn-glycerol 3-phosphate = a 1-acyl-sn-glycero-3-phosphate + phosphate. It participates in lipid metabolism; phospholipid metabolism. Functionally, catalyzes the transfer of an acyl group from acyl-phosphate (acyl-PO(4)) to glycerol-3-phosphate (G3P) to form lysophosphatidic acid (LPA). This enzyme utilizes acyl-phosphate as fatty acyl donor, but not acyl-CoA or acyl-ACP. This is Glycerol-3-phosphate acyltransferase from Streptococcus equi subsp. zooepidemicus (strain MGCS10565).